The chain runs to 181 residues: Alkyl hydroperoxide reductase AhpD (181 aa).

Catalysis depends on Cys-131, which acts as the Proton donor. Cys-131 and Cys-134 are disulfide-bonded. Cys-134 functions as the Cysteine sulfenic acid (-SOH) intermediate in the catalytic mechanism.

Belongs to the AhpD family.

The enzyme catalyses N(6)-[(R)-dihydrolipoyl]-L-lysyl-[lipoyl-carrier protein] + a hydroperoxide = N(6)-[(R)-lipoyl]-L-lysyl-[lipoyl-carrier protein] + an alcohol + H2O. Functionally, antioxidant protein with alkyl hydroperoxidase activity. Required for the reduction of the AhpC active site cysteine residues and for the regeneration of the AhpC enzyme activity. This is Alkyl hydroperoxide reductase AhpD from Bradyrhizobium sp. (strain BTAi1 / ATCC BAA-1182).